A 447-amino-acid chain; its full sequence is Tubulin beta-2 chain (447 aa).

GTP-binding residues include Gln11, Glu69, Ser138, Gly142, Thr143, Gly144, Asn204, and Asn226. Glu69 lines the Mg(2+) pocket. The segment at 419–447 (VSEYQQYQDATADDEGEYEDEEEEADLQD) is disordered. The segment covering 429–447 (TADDEGEYEDEEEEADLQD) has biased composition (acidic residues).

This sequence belongs to the tubulin family. As to quaternary structure, dimer of alpha and beta chains. A typical microtubule is a hollow water-filled tube with an outer diameter of 25 nm and an inner diameter of 15 nM. Alpha-beta heterodimers associate head-to-tail to form protofilaments running lengthwise along the microtubule wall with the beta-tubulin subunit facing the microtubule plus end conferring a structural polarity. Microtubules usually have 13 protofilaments but different protofilament numbers can be found in some organisms and specialized cells. Mg(2+) is required as a cofactor. Expressed in leaf sheaths and suspension cultured cells.

Its subcellular location is the cytoplasm. The protein localises to the cytoskeleton. Functionally, tubulin is the major constituent of microtubules, a cylinder consisting of laterally associated linear protofilaments composed of alpha- and beta-tubulin heterodimers. Microtubules grow by the addition of GTP-tubulin dimers to the microtubule end, where a stabilizing cap forms. Below the cap, tubulin dimers are in GDP-bound state, owing to GTPase activity of alpha-tubulin. The protein is Tubulin beta-2 chain (TUBB2) of Oryza sativa subsp. japonica (Rice).